The following is a 684-amino-acid chain: Signal peptide peptidase-like 2C (684 aa).

A signal peptide spans 1–21 (MACLGFLLPVGFLLLISTVAG). Residues 22–186 (GKYGVAHVVS…APPEPIIDYN (165 aa)) are Lumenal-facing. The PA domain maps to 83–163 (SPSQRPLRQT…HYADMLDILS (81 aa)). N100 carries an N-linked (GlcNAc...) asparagine glycan. Residues 187–207 (MLVIFILAVGTVAAGGYWAGL) traverse the membrane as a helical segment. At 208–253 (TEANRLQRRRARRGGGSGGHHQLQEAAAAEGAQKEDNEDIPVDFTP) the chain is on the cytoplasmic side. A disordered region spans residues 216–242 (RRARRGGGSGGHHQLQEAAAAEGAQKE). Residues 227 to 238 (HHQLQEAAAAEG) are compositionally biased toward low complexity. Residues 254–274 (AMTGVVVTLSCSLMLLLYFFY) traverse the membrane as a helical segment. At 275-276 (DH) the chain is on the lumenal side. The helical transmembrane segment at 277–297 (FVYVTIGIFGLGAGIGLYSCL) threads the bilayer. Residues 298–319 (SPLVCRLSLRQYQRPPHSLWAS) are Cytoplasmic-facing. Residues 320–340 (LPLPLLLLASLCATVIIFWVA) form a helical membrane-spanning segment. At 341–346 (YRNEDR) the chain is on the lumenal side. The helical transmembrane segment at 347–365 (WAWLLQDTLGISYCLFVLH) threads the bilayer. The Cytoplasmic portion of the chain corresponds to 366-376 (RVRLPTLKNCS). The chain crosses the membrane as a helical span at residues 377-397 (SFLLALLAFDVFFVFVTPFFT). D386 is a catalytic residue. Residues 398 to 439 (KTGESIMAQVALGPAESSSHERLPMVLKVPRLRVSALTLCSQ) are Lumenal-facing. Residues 440 to 460 (PFSILGFGDIVVPGFLVAYCC) form a helical membrane-spanning segment. D448 is a catalytic residue. Residues 461-472 (RFDVQVCSRQIY) lie on the Cytoplasmic side of the membrane. A helical membrane pass occupies residues 473–493 (FVACTVAYAVGLLVTFMAMVL). The Lumenal portion of the chain corresponds to 494-495 (MQ). The chain crosses the membrane as a helical span at residues 496–516 (MGQPALLYLVSSTLLTSLAVA). Positions 499 to 501 (PAL) match the PAL motif. Residues 517–684 (ACRQELSLFW…RKSMSTQAPL (168 aa)) are Cytoplasmic-facing. Residues 548 to 614 (KQEGAADAHT…SDAHLDPNEL (67 aa)) form a disordered region. Positions 582–592 (EIVTISENEAT) are enriched in polar residues. A compositionally biased stretch (basic and acidic residues) spans 594–611 (PEDRSDSSEGWSDAHLDP).

The protein belongs to the peptidase A22B family. As to quaternary structure, interacts (via active sites) with FREY; the interaction stabilizes FREY1 protein and inhibits SPPL2C proteolytic activity. Glycosylated. In terms of tissue distribution, highly expressed in testis where it is primarily localised in spermatids (at protein level).

Its subcellular location is the endoplasmic reticulum membrane. Sperm-specific intramembrane-cleaving aspartic protease (I-CLiP) that cleaves distinct tail-anchored proteins and SNARE proteins. In elongated spermatids, modulates intracellular Ca(2+) homeostasis by controlling PLN abundance through proteolytic cleavage. During spermatogenesis, processes SNARE proteins and impacts vesicular trafficking which supports compartmental reorganization in maturating spermatids and may play a role in formation of the acrosome. Functionally, in round spermatids, acts as a scaffold protein supporting FREY1 in IZUMO1 recruitment at the endoplasmic reticulum membrane and coordination of IZUMO1 complex assembly. Stabilizes FREY1 at the endoplasmic reticulum membrane through interaction. May recruit IZUMO1 interaction partners. In Homo sapiens (Human), this protein is Signal peptide peptidase-like 2C.